Consider the following 31-residue polypeptide: Kalata-B9 (31 aa).

The cyclopeptide (Gly-Asp) cross-link spans glycine 1–aspartate 31. Cystine bridges form between cysteine 6–cysteine 20, cysteine 10–cysteine 22, and cysteine 15–cysteine 28.

This sequence belongs to the cyclotide family. Bracelet subfamily. In terms of processing, this peptide occurs in both cyclic and linear forms.

Functionally, probably participates in a plant defense mechanism. This is Kalata-B9 from Oldenlandia affinis.